The primary structure comprises 620 residues: MGPRAQRARSTLRKLRRALCGRQDSPARARTPENRHFARKCARTCEHGYAHTHTCEDTPAKEHGHLGEHECLRGHGHAHAYEERCENKHKHLHAHEHTHERHGRAPRRLALTAPLPLLLLPLLLPPMILLFFLSPADAKPVLERQVFWNHSEPRASFLTPPHGPGAPPGGPFLTAVGGDGTLYLIPSNSSNPPVCVEIPLPYGPGHENVITLLLVDGGPRTPDALTVAACLEVGVSLLTTNATEPTNASNSSPRLTGSCEKLRTWALGNPPFTRVCGTGGGTPRCWALSTNGSIHDLGLDGVGYSPPQHNGTRPLLCTNTSEPHLHSCEHTAWNGDHDPQRCTRTPLDKHGQSWSPQCHKSTAPNQLGTRPPLLITKMSDENGTDYVYFLIGGSGDDYPPLLARVCEDDCWLSGHWTPRLQTVLQTNVSCANASALLKSTSGNGGPIVLLVEGEGGNGSICTYSGLDTGKHFAHTPQLGETGPRDPLVGACGHNGDVPESLAKKAREHPDLKQTLTPSGGPVALPGLDPRHVTALGTGPGLLFLGTNQSNVFLLRMNDNGRPNGSLTLFWNGTGNGNGRAGPRGPVLGLQHSSGGGAGAAGLLAVLFGDGVTVLRTEGAL.

The chain crosses the membrane as a helical span at residues 113-133 (APLPLLLLPLLLPPMILLFFL).

It is found in the host mitochondrion. The protein localises to the host membrane. Its function is as follows. Plays a role in the inhibition of host apoptosis. Prevents host TNF-alpha-induced mitochondrial membrane permeabilization and reduces caspase-3/CASP3 and PARP1 cleavage induced by the intrinsic apoptotic pathway. This Homo sapiens (Human) protein is Apoptosis regulator MC163R (MC163R).